Consider the following 280-residue polypeptide: tRNA pseudouridine synthase A (280 aa).

Residue aspartate 55 is the Nucleophile of the active site. Residue tyrosine 110 coordinates substrate.

This sequence belongs to the tRNA pseudouridine synthase TruA family.

It carries out the reaction uridine(38/39/40) in tRNA = pseudouridine(38/39/40) in tRNA. In terms of biological role, formation of pseudouridine at positions 38, 39 and 40 in the anticodon stem and loop of transfer RNAs. The chain is tRNA pseudouridine synthase A from Methanosphaerula palustris (strain ATCC BAA-1556 / DSM 19958 / E1-9c).